Consider the following 500-residue polypeptide: L-arabinose isomerase (500 aa).

4 residues coordinate Mn(2+): glutamate 306, glutamate 333, histidine 350, and histidine 450.

Belongs to the arabinose isomerase family. As to quaternary structure, homohexamer. Mn(2+) serves as cofactor.

It carries out the reaction beta-L-arabinopyranose = L-ribulose. Its pathway is carbohydrate degradation; L-arabinose degradation via L-ribulose; D-xylulose 5-phosphate from L-arabinose (bacterial route): step 1/3. Its function is as follows. Catalyzes the conversion of L-arabinose to L-ribulose. This is L-arabinose isomerase from Salmonella newport (strain SL254).